The sequence spans 277 residues: Proteasome subunit beta type-7 (277 aa).

Positions 1 to 43 (MAAVSVYAPPVGGFSFDNCRRNAVLEADFAKRGYKLPKVRKTG) are cleaved as a propeptide — removed in mature form. T44 functions as the Nucleophile in the catalytic mechanism.

The protein belongs to the peptidase T1B family. The 26S proteasome consists of a 20S proteasome core and two 19S regulatory subunits. The 20S proteasome core is a barrel-shaped complex made of 28 subunits that are arranged in four stacked rings. The two outer rings are each formed by seven alpha subunits, and the two inner rings are formed by seven beta subunits. The proteolytic activity is exerted by three beta-subunits PSMB5, PSMB6 and PSMB7. In terms of assembly, (Microbial infection) Interacts with HIV-1 Tat protein. As to expression, expressed at a low level in colonic mucosa. Up-regulated in colorectal cancer tissues.

The protein resides in the cytoplasm. It is found in the nucleus. It carries out the reaction Cleavage of peptide bonds with very broad specificity.. Functionally, component of the 20S core proteasome complex involved in the proteolytic degradation of most intracellular proteins. This complex plays numerous essential roles within the cell by associating with different regulatory particles. Associated with two 19S regulatory particles, forms the 26S proteasome and thus participates in the ATP-dependent degradation of ubiquitinated proteins. The 26S proteasome plays a key role in the maintenance of protein homeostasis by removing misfolded or damaged proteins that could impair cellular functions, and by removing proteins whose functions are no longer required. Associated with the PA200 or PA28, the 20S proteasome mediates ubiquitin-independent protein degradation. This type of proteolysis is required in several pathways including spermatogenesis (20S-PA200 complex) or generation of a subset of MHC class I-presented antigenic peptides (20S-PA28 complex). Within the 20S core complex, PSMB7 displays a trypsin-like activity. The polypeptide is Proteasome subunit beta type-7 (Homo sapiens (Human)).